Reading from the N-terminus, the 515-residue chain is 1-pyrroline-5-carboxylate dehydrogenase (515 aa).

Active-site residues include Glu286 and Cys320.

Belongs to the aldehyde dehydrogenase family. RocA subfamily.

It catalyses the reaction L-glutamate 5-semialdehyde + NAD(+) + H2O = L-glutamate + NADH + 2 H(+). The protein operates within amino-acid degradation; L-proline degradation into L-glutamate; L-glutamate from L-proline: step 2/2. The sequence is that of 1-pyrroline-5-carboxylate dehydrogenase from Bacillus mycoides (strain KBAB4) (Bacillus weihenstephanensis).